Reading from the N-terminus, the 196-residue chain is ATP-dependent Clp protease proteolytic subunit (196 aa).

The Nucleophile role is filled by Ser-96. Residue His-121 is part of the active site.

Belongs to the peptidase S14 family. Fourteen ClpP subunits assemble into 2 heptameric rings which stack back to back to give a disk-like structure with a central cavity, resembling the structure of eukaryotic proteasomes.

The protein localises to the cytoplasm. It catalyses the reaction Hydrolysis of proteins to small peptides in the presence of ATP and magnesium. alpha-casein is the usual test substrate. In the absence of ATP, only oligopeptides shorter than five residues are hydrolyzed (such as succinyl-Leu-Tyr-|-NHMec, and Leu-Tyr-Leu-|-Tyr-Trp, in which cleavage of the -Tyr-|-Leu- and -Tyr-|-Trp bonds also occurs).. Its function is as follows. Cleaves peptides in various proteins in a process that requires ATP hydrolysis. Has a chymotrypsin-like activity. Plays a major role in the degradation of misfolded proteins. This chain is ATP-dependent Clp protease proteolytic subunit, found in Streptococcus thermophilus (strain CNRZ 1066).